We begin with the raw amino-acid sequence, 161 residues long: Myosin regulatory light chain A, smooth adductor muscle (161 aa).

A1 carries the post-translational modification Blocked amino end (Ala). 2 consecutive EF-hand domains span residues 20-55 (KLMQEMKEAFTMIDQNRDGFIDINDLKEMFSSLGRT) and 89-124 (DTEETLRNAFAMFDELDTKKLNIEYIKDLLENMGDN). Ca(2+) contacts are provided by D33, N35, D37, and D44.

Its function is as follows. In molluscan muscle, calcium regulation is associated with myosin rather than with actin. Muscle myosin contains two types of light chains: the catalytic light chain, essential for ATPase activity, and the regulatory light chain, a calcium-binding protein responsible for Ca(2+) dependent binding and Ca(2+) dependent Mg-ATPase activity. This is Myosin regulatory light chain A, smooth adductor muscle from Mizuhopecten yessoensis (Japanese scallop).